Consider the following 487-residue polypeptide: Glucose starvation modulator protein 1 (487 aa).

The tract at residues 1–75 (MSIRFPEIPG…KRLTPQEKKA (75 aa)) is disordered. A compositionally biased stretch (polar residues) spans 59–68 (SFSSSMTKRL). The zn(2)-C6 fungal-type DNA-binding region spans 83-111 (CVFCHSKHLQCSHSRPCQNCIKRNLAHEC). The span at 122 to 139 (MSTTEVPAVSGESSSESG) shows a compositional bias: polar residues. The segment at 122–158 (MSTTEVPAVSGESSSESGRATGENGSEMGNPPDPQIA) is disordered. Residues 348–420 (CLLDYENLSR…FRLFESVAVG (73 aa)) enclose the PAS domain.

It belongs to the ERT1/acuK family.

It is found in the nucleus. In terms of biological role, transcription factor which regulates nonfermentable carbon utilization. The polypeptide is Glucose starvation modulator protein 1 (GSM1) (Clavispora lusitaniae (strain ATCC 42720) (Yeast)).